A 162-amino-acid chain; its full sequence is NADH-quinone oxidoreductase subunit I (162 aa).

2 consecutive 4Fe-4S ferredoxin-type domains span residues L53–E83 and T93–N122. Residues C63, C66, C69, C73, C102, C105, C108, and C112 each contribute to the [4Fe-4S] cluster site.

Belongs to the complex I 23 kDa subunit family. In terms of assembly, NDH-1 is composed of 14 different subunits. Subunits NuoA, H, J, K, L, M, N constitute the membrane sector of the complex. [4Fe-4S] cluster serves as cofactor.

It localises to the cell inner membrane. It catalyses the reaction a quinone + NADH + 5 H(+)(in) = a quinol + NAD(+) + 4 H(+)(out). Functionally, NDH-1 shuttles electrons from NADH, via FMN and iron-sulfur (Fe-S) centers, to quinones in the respiratory chain. The immediate electron acceptor for the enzyme in this species is believed to be ubiquinone. Couples the redox reaction to proton translocation (for every two electrons transferred, four hydrogen ions are translocated across the cytoplasmic membrane), and thus conserves the redox energy in a proton gradient. This is NADH-quinone oxidoreductase subunit I from Granulibacter bethesdensis (strain ATCC BAA-1260 / CGDNIH1).